The following is a 492-amino-acid chain: Endoglucanase 15 (492 aa).

An N-terminal signal peptide occupies residues 1-30 (MSCISSQCFITIKSICIVLLLSITCGAVSA). D86 acts as the Nucleophile in catalysis. Catalysis depends on residues H414, D466, and E475.

The protein belongs to the glycosyl hydrolase 9 (cellulase E) family.

It localises to the secreted. It carries out the reaction Endohydrolysis of (1-&gt;4)-beta-D-glucosidic linkages in cellulose, lichenin and cereal beta-D-glucans.. The polypeptide is Endoglucanase 15 (Arabidopsis thaliana (Mouse-ear cress)).